The chain runs to 508 residues: Steroid 17-alpha-hydroxylase/17,20 lyase (508 aa).

Asn-202 provides a ligand contact to substrate. Position 442 (Cys-442) interacts with heme.

The protein belongs to the cytochrome P450 family. Heme is required as a cofactor. Post-translationally, phosphorylation is necessary for 17,20-lyase, but not for 17-alpha-hydroxylase activity.

It localises to the endoplasmic reticulum membrane. It is found in the microsome membrane. It carries out the reaction a C21-steroid + reduced [NADPH--hemoprotein reductase] + O2 = a 17alpha-hydroxy-C21-steroid + oxidized [NADPH--hemoprotein reductase] + H2O + H(+). It catalyses the reaction progesterone + reduced [NADPH--hemoprotein reductase] + O2 = 17alpha-hydroxyprogesterone + oxidized [NADPH--hemoprotein reductase] + H2O + H(+). The catalysed reaction is pregnenolone + reduced [NADPH--hemoprotein reductase] + O2 = 17alpha-hydroxypregnenolone + oxidized [NADPH--hemoprotein reductase] + H2O + H(+). The enzyme catalyses 17alpha-hydroxyprogesterone + reduced [NADPH--hemoprotein reductase] + O2 = androst-4-ene-3,17-dione + acetate + oxidized [NADPH--hemoprotein reductase] + H2O + 2 H(+). It carries out the reaction 17alpha-hydroxyprogesterone + reduced [NADPH--hemoprotein reductase] + O2 = 16alpha,17alpha-dihydroxyprogesterone + oxidized [NADPH--hemoprotein reductase] + H2O + H(+). It catalyses the reaction 16alpha,17alpha-dihydroxyprogesterone + reduced [NADPH--hemoprotein reductase] + O2 = 6beta,16alpha,17alpha-trihydroxyprogesterone + oxidized [NADPH--hemoprotein reductase] + H2O + H(+). The catalysed reaction is 17alpha-hydroxypregnenolone + reduced [NADPH--hemoprotein reductase] + O2 = 3beta-hydroxyandrost-5-en-17-one + acetate + oxidized [NADPH--hemoprotein reductase] + H2O + 2 H(+). The enzyme catalyses 16alpha,17alpha-dihydroxypregnenolone + reduced [NADPH--hemoprotein reductase] + O2 = 3beta,16alpha-dihydroxy-androst-5-en-17-one + acetate + oxidized [NADPH--hemoprotein reductase] + H2O + 2 H(+). It carries out the reaction 3beta-hydroxyandrost-5-en-17-one + reduced [NADPH--hemoprotein reductase] + O2 = 3beta,16alpha-dihydroxy-androst-5-en-17-one + oxidized [NADPH--hemoprotein reductase] + H2O + H(+). It catalyses the reaction androst-4-ene-3,17-dione + reduced [NADPH--hemoprotein reductase] + O2 = 16alpha-hydroxyandrost-4-ene-3,17-dione + oxidized [NADPH--hemoprotein reductase] + H2O + H(+). Its pathway is steroid hormone biosynthesis. The protein operates within steroid biosynthesis; glucocorticoid biosynthesis. Regulated predominantly by intracellular cAMP levels. The 17,20-lyase activity is stimulated by cytochrome b5, which acts as an allosteric effector increasing the Vmax of the lyase activity. A cytochrome P450 monooxygenase involved in corticoid and androgen biosynthesis. Catalyzes 17-alpha hydroxylation of C21 steroids, which is common for both pathways. A second oxidative step, required only for androgen synthesis, involves an acyl-carbon cleavage. The 17-alpha hydroxy intermediates, as part of adrenal glucocorticoids biosynthesis pathway, are precursors of cortisol. Hydroxylates steroid hormones, pregnenolone and progesterone to form 17-alpha hydroxy metabolites, followed by the cleavage of the C17-C20 bond to form C19 steroids, dehydroepiandrosterone (DHEA) and androstenedione. Has 16-alpha hydroxylase activity. Catalyzes 16-alpha hydroxylation of 17-alpha hydroxy pregnenolone, followed by the cleavage of the C17-C20 bond to form 16-alpha-hydroxy DHEA. Also 16-alpha hydroxylates androgens, relevant for estriol synthesis. Mechanistically, uses molecular oxygen inserting one oxygen atom into a substrate, and reducing the second into a water molecule, with two electrons provided by NADPH via cytochrome P450 reductase (CPR; NADPH-ferrihemoprotein reductase). In Homo sapiens (Human), this protein is Steroid 17-alpha-hydroxylase/17,20 lyase.